Here is a 753-residue protein sequence, read N- to C-terminus: Bifunctional terpene synthase FUP1 (753 aa).

The interval 1–329 (MGPLLYRSRH…CSACPRQNAW (329 aa)) is terpene cyclase. A Mg(2+)-binding site is contributed by aspartate 96. The DDXXD 1 signature appears at 96-100 (DDTGE). Residues 231-239 (NDYFSWERE) carry the NSE/DTE motif. The interval 330–745 (KNDTLSNGQN…MLRLCLAKLS (416 aa)) is prenyltransferase. The isopentenyl diphosphate site is built by lysine 461, arginine 464, and histidine 493. 2 residues coordinate Mg(2+): aspartate 500 and aspartate 504. Residues 500–504 (DDLED) carry the DDXXD 2 motif. Arginine 509 serves as a coordination point for dimethylallyl diphosphate. Arginine 510 contacts isopentenyl diphosphate. 6 residues coordinate dimethylallyl diphosphate: lysine 587, threonine 588, glutamine 625, asparagine 632, lysine 640, and lysine 650.

The protein in the N-terminal section; belongs to the terpene synthase family. It in the C-terminal section; belongs to the FPP/GGPP synthase family. As to quaternary structure, hexamer. The cofactor is Mg(2+).

It catalyses the reaction isopentenyl diphosphate + (2E,6E)-farnesyl diphosphate = (2E,6E,10E)-geranylgeranyl diphosphate + diphosphate. It participates in secondary metabolite biosynthesis; terpenoid biosynthesis. Its function is as follows. Bifunctional terpene synthase; part of the gene cluster that mediates the biosynthesis of the mycotoxin fusaproliferin (FUP) that belongs to the class of bicyclic sesterterpenoids. The FUP biosynthetic pathway starts with the enzyme encoded by FUP1 that combines a C-terminal prenyltransferase domain responsible for the synthesis of geranylgeranyl diphosphate with the N-terminal terpene cyclase domain, to yield preterpestacin I. Preterpestacin I is then decorated by oxygenation steps that are catalyzed by two cytochrome P450 monooxygenases. First, FUP2 introduces a hydroxyl group at the C-24 position resulting in the formation of preterpestacin IIa, which can be further oxidized. The second P450 monooxygenase catalyzes the hydroxylation at C-16 and C-17 of preterpestacin IIa, producing preterpestacin III. Subsequently, the FAD-dependent oxidoreductase FUP4 catalyzes the oxidation of the hydroxy group at the C-16 position to a keto group, leading to the formation of (-)-terpestacin, which is the immediate precursor of FUP. The final step in the proposed biosynthetic pathway is the addition of an acetyl group at the C-24 position of terpestacin, which is catalyzed by the acetyltransferase FUP5. This Fusarium proliferatum (strain ET1) (Orchid endophyte fungus) protein is Bifunctional terpene synthase FUP1.